Reading from the N-terminus, the 461-residue chain is Growth/differentiation factor 7 (461 aa).

The N-terminal stretch at 1–19 is a signal peptide; sequence MDLSAAAALCLWLLSACRP. A propeptide spanning residues 20 to 315 is cleaved from the precursor; it reads RDGLEAAAVL…ANLGGRRRRR (296 aa). A glycan (N-linked (GlcNAc...) asparagine) is linked at N79. The segment at 287-360 is disordered; the sequence is LRAAAEPPPD…GHGRRGRSRC (74 aa). A compositionally biased stretch (gly residues) spans 323 to 350; the sequence is GAQGSGGGGGGGGGGGGGGGGGGGGAGR. Positions 351 to 360 are enriched in basic residues; it reads GHGRRGRSRC. Cystine bridges form between C360/C426, C389/C458, and C393/C460.

This sequence belongs to the TGF-beta family. In terms of assembly, homodimer; disulfide-linked.

It is found in the secreted. This chain is Growth/differentiation factor 7 (Gdf7), found in Mus musculus (Mouse).